Here is a 1129-residue protein sequence, read N- to C-terminus: DNA-directed RNA polymerase I subunit RPA2 (1129 aa).

The C4-type zinc-finger motif lies at 1061-1093 (CHKCGSILAPLQRIVKRNETGGLSSQPDTCRLC).

Belongs to the RNA polymerase beta chain family. In terms of assembly, component of the RNA polymerase I (Pol I) complex consisting of at least 13 subunits.

The protein resides in the nucleus. The protein localises to the nucleolus. The enzyme catalyses RNA(n) + a ribonucleoside 5'-triphosphate = RNA(n+1) + diphosphate. Functionally, DNA-dependent RNA polymerase catalyzes the transcription of DNA into RNA using the four ribonucleoside triphosphates as substrates. Second largest core component of RNA polymerase I which synthesizes ribosomal RNA precursors. Proposed to contribute to the polymerase catalytic activity and forms the polymerase active center together with the largest subunit. Pol I is composed of mobile elements and RPA2 is part of the core element with the central large cleft and probably a clamp element that moves to open and close the cleft. This Drosophila melanogaster (Fruit fly) protein is DNA-directed RNA polymerase I subunit RPA2.